The chain runs to 861 residues: Glucans biosynthesis glucosyltransferase H (861 aa).

Disordered stretches follow at residues 65–89 and 101–129; these read RLSAREPAKGETPEPGGSTYGSVGR and AGEPLLKRRPDGTVHVDTGPEPQRSSMVP. Basic and acidic residues-rich tracts occupy residues 67–76 and 105–114; these read SAREPAKGET and LLKRRPDGTV. A run of 6 helical transmembrane segments spans residues 181-201, 208-228, 532-552, 589-609, 616-636, and 698-718; these read FLLGLVVAQTTLATYFMTKVL, LLEIAILVLFAVLFSWVSAGF, VFLTGIMAYLSAPLWFLFLLL, LFSATATLLFLPKVASILLLV, GGLPRLVMSMLIEVVLSALLA, and FVLWLLPIVGSLALSIPLSVM.

Belongs to the glycosyltransferase 2 family. OpgH subfamily.

Its subcellular location is the cell inner membrane. It functions in the pathway glycan metabolism; osmoregulated periplasmic glucan (OPG) biosynthesis. Its function is as follows. Involved in the biosynthesis of osmoregulated periplasmic glucans (OPGs). The protein is Glucans biosynthesis glucosyltransferase H of Cupriavidus pinatubonensis (strain JMP 134 / LMG 1197) (Cupriavidus necator (strain JMP 134)).